The primary structure comprises 653 residues: Probable syringafactin export ATP-binding/permease protein SyfD (653 aa).

The ABC transporter domain maps to 6 to 244 (LELNGVTRRF…NEKTTERLPT (239 aa)). Residue 42 to 49 (GASGSGKS) coordinates ATP. Transmembrane regions (helical) follow at residues 252 to 272 (LMAN…ALIS), 278 to 298 (LLTM…VAIG), 526 to 546 (LALL…IGVM), 583 to 603 (MVCL…GYVF), and 616 to 636 (LGSI…FGFV).

The protein belongs to the ABC transporter superfamily. Macrolide exporter (TC 3.A.1.122) family. Probably part of a tripartite efflux system, which is composed of an inner membrane transporter, a periplasmic membrane fusion protein, and an outer membrane component.

The protein localises to the cell inner membrane. Functionally, probably involved in the export of syringafactins. In Pseudomonas syringae pv. syringae (strain B728a), this protein is Probable syringafactin export ATP-binding/permease protein SyfD.